The primary structure comprises 530 residues: MSVKHVSVLLLLLQLSCCFRTGSCGKVLVWPMDFSLWMNLNVILDELVRRGHEVIVLRNSASIFIDPSKQANIKFETFPIAATKDDLEDLFVHYVSTWTNARQNSQWKYFSLLQKLFSEYSDSCENACKEVVFNKTLMTKLQESRFDILLSDAIGPCGELLAELLKIPFVYSLRFTPGYTMEKYSGGLSVPPSYVPIILSDLSGKMTFMERVNNMLCMLYFDFWFQMFNKKRWDQFYSEVLGRPVTFSELVGKADMWLIRSYWDLEFPRPTLPNIQFVGGLHCKPAKPLPKEMEEFVQSSGEEGVVVFSLGSMVSNMTEERANLIASAFAQLPQKVIWRFDGQKPETLGPNTRIYDWIPQNDLLGHPKTKAFVTHGGANGIYEAIHHGIPMVGLPLFGEQPDNIAHMTAKGAAIRLNWKTMSSEDLLNALKTVINDPSYKENVMTLSSIHHDQPMKPLDRAVFWIEYVMRHKGAKHLRVAAHDLTWFQYHSLDVVGFLVSCAAFLIFLVIKSYLFVYQKLVKIGKKQKRD.

The signal sequence occupies residues 1–24 (MSVKHVSVLLLLLQLSCCFRTGSC). N-linked (GlcNAc...) asparagine glycans are attached at residues Asn134 and Asn316. Residues 494–510 (VVGFLVSCAAFLIFLVI) traverse the membrane as a helical segment.

The protein belongs to the UDP-glycosyltransferase family.

The protein localises to the microsome membrane. It localises to the endoplasmic reticulum membrane. It catalyses the reaction glucuronate acceptor + UDP-alpha-D-glucuronate = acceptor beta-D-glucuronoside + UDP + H(+). In terms of biological role, UDPGT is of major importance in the conjugation and subsequent elimination of potentially toxic xenobiotics and endogenous compounds. The chain is UDP-glucuronosyltransferase 2B14 (UGT2B14) from Oryctolagus cuniculus (Rabbit).